Consider the following 2329-residue polypeptide: Genome polyprotein (2329 aa).

Residues Met29–Pro182 enclose the Peptidase C28 domain. Residues Cys51, His148, and Asp163 each act as for leader protease activity in the active site. Disordered regions lie at residues Gln197–Asn218 and Gln238–Gln264. Residue Gly202 is the site of N-myristoyl glycine; by host attachment. Composition is skewed to polar residues over residues Gly204–Asn218 and Gln238–Gly251. Positions Ser252–Gln264 are enriched in low complexity. Positions Ala787 to Tyr795 are antigenic epitope. Residues Arg866–Asp868 carry the Cell attachment site motif. Residues Asn1186–Asp1350 form the SF3 helicase domain. Gly1214–Ser1221 lines the ATP pocket. Residues Lys1478 to Ile1498 lie within the membrane without spanning it. Basic and acidic residues-rich tracts occupy residues Lys1526–Pro1535 and Phe1546–Asp1558. The tract at residues Lys1526 to Pro1577 is disordered. Residues Tyr1578, Tyr1601, and Tyr1625 each carry the O-(5'-phospho-RNA)-tyrosine modification. The Peptidase C3 domain maps to Ala1649–Leu1845. The active-site For protease 3C activity; Proton donor/acceptor is the His1692. Catalysis depends on for protease 3C activity residues Asp1730 and Cys1809. 2 consecutive short sequence motifs (nuclear localization signal) follow at residues Met1875 to Thr1883 and Arg1876 to Thr1883. Residues Arg2093–Ala2211 enclose the RdRp catalytic domain. Asp2197 (for RdRp activity) is an active-site residue.

This sequence belongs to the picornaviruses polyprotein family. As to quaternary structure, interacts with host ISG15. In terms of assembly, interacts (via R-G-D motif) with host ITGAV/ITGB6. Interacts with host MAVS; this interaction inhibits binding of host TRAF3 to MAVS, thereby suppressing interferon-mediated responses. Forms homooligomers. As to quaternary structure, homohexamer. Interacts with host VIM. Interacts with host BECN1. In terms of assembly, interacts with host DCTN3. Interacts with RNA-dependent RNA polymerase; this interaction allows 3B-1 to binds 2 polymerases and act as a primer. It also allows the recruitment of the RNA-dependent RNA polymerase to host membranes. As to quaternary structure, interacts with RNA-dependent RNA polymerase; this interaction allows 3B-2 to act as a primer. In terms of assembly, interacts with RNA-dependent RNA polymerase; this interaction allows 3B-3 to act as a primer. Interacts with 3B-1; this interaction allows 3B-1 to binds 2 polymerases and act as a primer. It also allows the recruitment of the RNA-dependent RNA polymerase to host membranes. Interacts with 3B-2; this interaction allows 3B-2 to act as a primer. Interacts with 3B-3; this interaction allows 3B-3 to act as a primer. In terms of processing, specific enzymatic cleavages in vivo by the viral proteases yield a variety of precursors and mature proteins. The polyprotein seems to be cotranslationally cleaved at the 2A/2B junction by a ribosomal skip from one codon to the next without formation of a peptide bond. This process would release the L-P1-2A peptide from the translational complex. Post-translationally, during virion maturation, immature virions are rendered infectious following cleavage of VP0 into VP4 and VP2. This maturation seems to be an autocatalytic event triggered by the presence of RNA in the capsid and is followed by a conformational change of the particle. Myristoylation is required during RNA encapsidation and formation of the mature virus particle. In terms of processing, uridylylated by the polymerase and covalently linked to the 5'-end of genomic RNA. These uridylylated forms act as a nucleotide-peptide primer for the polymerase.

The protein localises to the host nucleus. It is found in the host cytoplasm. The protein resides in the virion. It localises to the host endoplasmic reticulum membrane. Its subcellular location is the host cytoplasmic vesicle membrane. The enzyme catalyses Autocatalytically cleaves itself from the polyprotein of the foot-and-mouth disease virus by hydrolysis of a Lys-|-Gly bond, but then cleaves host cell initiation factor eIF-4G at bonds -Gly-|-Arg- and -Lys-|-Arg-.. The catalysed reaction is a ribonucleoside 5'-triphosphate + H2O = a ribonucleoside 5'-diphosphate + phosphate + H(+). It catalyses the reaction RNA(n) + a ribonucleoside 5'-triphosphate = RNA(n+1) + diphosphate. It carries out the reaction Selective cleavage of Gln-|-Gly bond in the poliovirus polyprotein. In other picornavirus reactions Glu may be substituted for Gln, and Ser or Thr for Gly.. Its function is as follows. Autocatalytically cleaves itself from the polyprotein at the L/VP0 junction. Also cleaves the host translation initiation factors EIF4G1 and EIF4G3, in order to shut off the capped cellular mRNA transcription. Plays a role in counteracting host innate antiviral response using diverse mechanisms. Possesses a deubiquitinase activity acting on both 'Lys-48' and 'Lys-63'-linked polyubiquitin chains. In turn, inhibits the ubiquitination and subsequent activation of key signaling molecules of type I IFN response such as host RIGI, TBK1, TRAF3 and TRAF6. Inhibits host NF-kappa-B activity by inducing a decrease in RELA mRNA levels. Cleaves a peptide bond in the C-terminus of host ISG15, resulting in the damaging of this modifier that can no longer be attached to target proteins. Also cleaves host G3BP1 and G3BP2 in order to inhibit cytoplasmic stress granules assembly. Lies on the inner surface of the capsid shell. After binding to the host receptor, the capsid undergoes conformational changes. Capsid protein VP4 is released, capsid protein VP1 N-terminus is externalized, and together, they shape a pore in the host membrane through which the viral genome is translocated into the host cell cytoplasm. After genome has been released, the channel shrinks. Functionally, forms an icosahedral capsid of pseudo T=3 symmetry with capsid proteins VP1 and VP3. The capsid is composed of 60 copies of each capsid protein organized in the form of twelve pentamers and encloses the viral positive strand RNA genome. Upon acidifcation in the endosome, dissociates into pentamers. In terms of biological role, forms an icosahedral capsid of pseudo T=3 symmetry with capsid proteins VP0 and VP3. The capsid is composed of 60 copies of each capsid protein organized in the form of twelve pentamers and encloses the viral positive strand RNA genome. Upon acidifcation in the endosome, dissociates into pentamers. Its function is as follows. Forms an icosahedral capsid of pseudo T=3 symmetry with capsid proteins VP2 and VP3. The capsid is composed of 60 copies of each capsid protein organized in the form of twelve pentamers and encloses the viral positive strand RNA genome. Mediates cell entry by attachment to an integrin receptor, usually host ITGAV/ITGB6. In addition, targets host MAVS to suppress type I IFN pathway. Upon acidifcation in the endosome, dissociates into pentamers. Mediates self-processing of the polyprotein by a translational effect termed 'ribosome skipping'. Mechanistically, 2A-mediated cleavage occurs between the C-terminal glycine and the proline of the downstream protein 2B. In the case of foot-and-mouth disease virus, the 2A oligopeptide is post-translationally 'trimmed' from the C-terminus of the upstream protein 1D by 3C proteinase. Functionally, plays an essential role in the virus replication cycle by acting as a viroporin. Creates a pore in the host endoplasmic reticulum and as a consequence releases Ca2+ in the cytoplasm of infected cell. In turn, high levels of cytoplasmic calcium may trigger membrane trafficking and transport of viral ER-associated proteins to viroplasms, sites of viral genome replication. In terms of biological role, associates with and induces structural rearrangements of intracellular membranes. Triggers host autophagy by interacting with host BECN1 and thereby promotes viral replication. Participates in viral replication and interacts with host DHX9. Displays RNA-binding, nucleotide binding and NTPase activities. May play a role in virion morphogenesis and viral RNA encapsidation by interacting with the capsid protein VP3. Its function is as follows. Plays important roles in virus replication, virulence and host range. Cooperates with host DDX56 to inhibit IRF3 nuclear translocation and subsequent type I interferon production. Covalently linked to the 5'-end of both the positive-strand and negative-strand genomic RNAs. Acts as a genome-linked replication primer. Functionally, cysteine protease that generates mature viral proteins from the precursor polyprotein. In addition to its proteolytic activity, binds to viral RNA and thus influences viral genome replication. RNA and substrate bind cooperatively to the protease. In terms of biological role, RNA-directed RNA polymerase 3D-POL replicates genomic and antigenomic RNA by recognizing replications specific signals. Covalently attaches UMP to a tyrosine of VPg, which is used to prime RNA synthesis. The positive stranded RNA genome is first replicated at virus induced membranous vesicles, creating a dsRNA genomic replication form. This dsRNA is then used as template to synthesize positive stranded RNA genomes. ss(+)RNA genomes are either translated, replicated or encapsidated. The chain is Genome polyprotein from Foot-and-mouth disease virus serotype Asia-1 (FMDV).